The primary structure comprises 454 residues: MLKYRSLPIKRAIHHPAPGITPISPRIMVSRLRVIPSFNLKFNRWNSSVPESSKKELKTTDGNQESASKVSPVKEKEKVPFKVKMQKALRHYWDGSKLLGLEIKISSKLLMKSAAGYPLTRRENLQLKRTTQDIVRLVPFAAFLIIPFAELLLPFALKLFPNLLPSTYESSKKRENKLENLRNTRKLMSEIIKNNKSHFKPNNISEEQKALFNRFYTHVRATGVPESRQQLIEVARLFTDDTVLDNVTRPYLIALAKYMNLQPFGTDVMLRYRIRYKMLELKKDDLSIYYEDAEQLSLSELKTACASRGIRSVDVEPSVLYSNLRLWLNMRLKDKIPSTLLIMATAYNYGNVQSKESLYDALCDVLIGIPDELYHEVKVNVVKEDEASAKQKLKQLREQEEIMKEEEQQEENAIVSVKDELSLDDQDKNIDAAAPDVKPHDTKPIGEAAAIKEK.

The N-terminal 45 residues, 1–45 (MLKYRSLPIKRAIHHPAPGITPISPRIMVSRLRVIPSFNLKFNRW), are a transit peptide targeting the mitochondrion. Over 46–136 (NSSVPESSKK…LKRTTQDIVR (91 aa)) the chain is Mitochondrial intermembrane. Residues 51–73 (ESSKKELKTTDGNQESASKVSPV) form a disordered region. Residues 137–157 (LVPFAAFLIIPFAELLLPFAL) traverse the membrane as a helical segment. The Mitochondrial matrix portion of the chain corresponds to 158 to 454 (KLFPNLLPST…IGEAAAIKEK (297 aa)). A Letm1 RBD domain is found at 177-371 (KLENLRNTRK…LCDVLIGIPD (195 aa)). Residues 376–423 (EVKVNVVKEDEASAKQKLKQLREQEEIMKEEEQQEENAIVSVKDELSL) adopt a coiled-coil conformation. 2 stretches are compositionally biased toward basic and acidic residues: residues 420 to 430 (ELSLDDQDKNI) and 437 to 454 (VKPH…IKEK). Residues 420–454 (ELSLDDQDKNIDAAAPDVKPHDTKPIGEAAAIKEK) form a disordered region.

In terms of assembly, associates with the mitochondrial ribosomes.

The protein resides in the mitochondrion inner membrane. Functionally, involved in mitochondrial potassium homeostasis through the mitochondrial K(+)/H(+) exchange regulation. The sequence is that of LETM1 domain-containing protein YLH47, mitochondrial (YLH47) from Saccharomyces cerevisiae (strain ATCC 204508 / S288c) (Baker's yeast).